The primary structure comprises 543 residues: Putative fatty acyl-CoA reductase CG8303 (543 aa).

A disordered region spans residues 1–29 (MAVITEHGGTTSSPPENNNSIGNGKHRVN). Residues 8–22 (GGTTSSPPENNNSIG) show a composition bias toward polar residues. 3 consecutive transmembrane segments (helical) span residues 386–406 (LFFY…EKLF), 500–520 (VFNV…YFAL), and 522–542 (LTLG…FLVW).

This sequence belongs to the fatty acyl-CoA reductase family.

The protein resides in the membrane. It catalyses the reaction a long-chain fatty acyl-CoA + 2 NADPH + 2 H(+) = a long-chain primary fatty alcohol + 2 NADP(+) + CoA. The enzyme catalyses hexadecanoyl-CoA + 2 NADPH + 2 H(+) = hexadecan-1-ol + 2 NADP(+) + CoA. It carries out the reaction octadecanoyl-CoA + 2 NADPH + 2 H(+) = octadecan-1-ol + 2 NADP(+) + CoA. In terms of biological role, catalyzes the reduction of C16 or C18 fatty acyl-CoA to fatty alcohols. In Drosophila melanogaster (Fruit fly), this protein is Putative fatty acyl-CoA reductase CG8303.